The following is a 496-amino-acid chain: Polyamine oxidase 6 (496 aa).

The N-terminal stretch at 1-27 is a signal peptide; that stretch reads MTKPTTMAIFLVLALSIAQLLPSLVAG. Residues E61 and R69 each coordinate FAD. N103 and N150 each carry an N-linked (GlcNAc...) asparagine glycan. V261 is an FAD binding site. N278 is a glycosylation site (N-linked (GlcNAc...) asparagine). E454 is an FAD binding site.

Belongs to the flavin monoamine oxidase family. The cofactor is FAD.

It is found in the secreted. Its subcellular location is the extracellular space. The protein localises to the apoplast. Its pathway is amine and polyamine degradation; spermine degradation. Flavoenzyme involved in polyamine back-conversion. Catalyzes the oxidation of the secondary amino group of polyamines, such as spermine and spermidine. This chain is Polyamine oxidase 6, found in Oryza sativa subsp. japonica (Rice).